The primary structure comprises 63 residues: H/ACA ribonucleoprotein complex subunit 3-like protein (63 aa).

Residues 18 to 40 form a disordered region; it reads KMDPEGKPTLSAHPARFSPDDKY.

This sequence belongs to the NOP10 family. As to quaternary structure, component of the small nucleolar ribonucleoprotein particles containing H/ACA-type snoRNAs (H/ACA snoRNPs).

The protein resides in the nucleus. The protein localises to the nucleolus. In terms of biological role, required for ribosome biogenesis. Part of a complex which catalyzes pseudouridylation of rRNA. This involves the isomerization of uridine such that the ribose is subsequently attached to C5, instead of the normal N1. Pseudouridine ('psi') residues may serve to stabilize the conformation of rRNAs. In Trypanosoma cruzi, this protein is H/ACA ribonucleoprotein complex subunit 3-like protein.